We begin with the raw amino-acid sequence, 597 residues long: Probable E3 ubiquitin-protein ligase ARI1 (597 aa).

The tract at residues S119 to Q333 is TRIAD supradomain. Zn(2+) is bound by residues C123, C126, C140, H142, C145, C148, C167, C172, C214, C220, C236, C238, C243, C246, H251, C256, C283, and C286. The segment at C123–C172 adopts an RING-type 1 zinc-finger fold. The IBR-type zinc finger occupies A194–C256. The RING-type 2; atypical zinc-finger motif lies at C283–C311. C296 is a catalytic residue. 6 residues coordinate Zn(2+): C301, C303, C308, C311, H319, and C329. A disordered region spans residues F536–G575. Residues D540–Q568 show a composition bias toward polar residues.

This sequence belongs to the RBR family. Ariadne subfamily. The cofactor is Zn(2+). Ubiquitous.

It carries out the reaction [E2 ubiquitin-conjugating enzyme]-S-ubiquitinyl-L-cysteine + [acceptor protein]-L-lysine = [E2 ubiquitin-conjugating enzyme]-L-cysteine + [acceptor protein]-N(6)-ubiquitinyl-L-lysine.. Its pathway is protein modification; protein ubiquitination. Might act as an E3 ubiquitin-protein ligase, or as part of E3 complex, which accepts ubiquitin from specific E2 ubiquitin-conjugating enzymes and then transfers it to substrates. This chain is Probable E3 ubiquitin-protein ligase ARI1 (ARI1), found in Arabidopsis thaliana (Mouse-ear cress).